The primary structure comprises 187 residues: Probable cobalt-precorrin-6B C(15)-methyltransferase (decarboxylating) (187 aa).

Residues T15, 39–43 (GSCTG), E60, and A89 each bind S-adenosyl-L-methionine.

It belongs to the methyltransferase superfamily. Archaeal-type CbiT family.

The enzyme catalyses Co-precorrin-6B + S-adenosyl-L-methionine = Co-precorrin-7 + S-adenosyl-L-homocysteine + CO2. The protein operates within cofactor biosynthesis; adenosylcobalamin biosynthesis; cob(II)yrinate a,c-diamide from sirohydrochlorin (anaerobic route): step 8/10. Functionally, catalyzes the methylation of C-15 in cobalt-precorrin-6B followed by the decarboxylation of C-12 to form cobalt-precorrin-7. The polypeptide is Probable cobalt-precorrin-6B C(15)-methyltransferase (decarboxylating) (Halobacterium salinarum (strain ATCC 700922 / JCM 11081 / NRC-1) (Halobacterium halobium)).